Reading from the N-terminus, the 386-residue chain is DNA methyltransferase CcrM (386 aa).

The 103-residue stretch at L280–A382 folds into the RAMA domain.

It belongs to the N(4)/N(6)-methyltransferase family.

The catalysed reaction is a 2'-deoxyadenosine in DNA + S-adenosyl-L-methionine = an N(6)-methyl-2'-deoxyadenosine in DNA + S-adenosyl-L-homocysteine + H(+). Functionally, a beta subtype methylase that recognizes the double-stranded sequence 5'-GANTC-3' and methylates A-2 on both strands. CcrM-mediated methylation has important cellular functions. Contributes to the accurate cell-cycle control of DNA replication and cellular morphology. This Brucella ovis (strain ATCC 25840 / 63/290 / NCTC 10512) protein is DNA methyltransferase CcrM (ccrM).